The sequence spans 231 residues: 5'-methylthioadenosine/S-adenosylhomocysteine nucleosidase (231 aa).

E12 acts as the Proton acceptor in catalysis. Substrate contacts are provided by residues G78, V153, and 174 to 175; that span reads ME. D198 acts as the Proton donor in catalysis.

Belongs to the PNP/UDP phosphorylase family. MtnN subfamily.

The enzyme catalyses S-adenosyl-L-homocysteine + H2O = S-(5-deoxy-D-ribos-5-yl)-L-homocysteine + adenine. The catalysed reaction is S-methyl-5'-thioadenosine + H2O = 5-(methylsulfanyl)-D-ribose + adenine. It carries out the reaction 5'-deoxyadenosine + H2O = 5-deoxy-D-ribose + adenine. Its pathway is amino-acid biosynthesis; L-methionine biosynthesis via salvage pathway; S-methyl-5-thio-alpha-D-ribose 1-phosphate from S-methyl-5'-thioadenosine (hydrolase route): step 1/2. In terms of biological role, catalyzes the irreversible cleavage of the glycosidic bond in both 5'-methylthioadenosine (MTA) and S-adenosylhomocysteine (SAH/AdoHcy) to adenine and the corresponding thioribose, 5'-methylthioribose and S-ribosylhomocysteine, respectively. Also cleaves 5'-deoxyadenosine, a toxic by-product of radical S-adenosylmethionine (SAM) enzymes, into 5-deoxyribose and adenine. This Vibrio parahaemolyticus serotype O3:K6 (strain RIMD 2210633) protein is 5'-methylthioadenosine/S-adenosylhomocysteine nucleosidase.